The primary structure comprises 613 residues: MSDPQTSMAATAAVSPSDYLQPAASTTQDSQPSPLALLAATCSKIGPPAVEAAVTPPAPPQPTPRKLVPIKPAPLPLSPSKNSFGILSSKGNILQIQGSQLSTSYPGGQLVFAIQNPTVVNKGTRSNTSIQYQAVPQIQASSPQTIQVQPSLTNQIQIIPGTNQAIITPSPSSHKPVPIKPAPVQKSSTTTTPAQSGANVVKLTGGGGNVTLTLPVNNLVNTSDPGAATQLLTESPPAPLSKTNKKARKKSLPAAQPPVAVAEQVETVLIETTADNIIQAGNNLLIVQSPGGGQPAVVQQVQVVPPKAEQQQVVQIPQQALRVVQAASATLPTVPQKPSQNFQIQAAEPSPTQVYIRTPSGEVQTVLVQDSPPATAATASTTTCSSPASRAAHLSGTSKKHSAAILRKERPLPKIAPAGSIISLNAAQLAAAAQAMQTININGVQVQGVPVTITNTGGQQQLTVQNVSGNNLTISGLSPTQIQLQMEQALAGETQPGEKRRRMACTCPNCKDGDKRSGEQGKKKHVCHIPDCGKTFRKTSLLRAHVRLHTGERPFVCNWFFCGKRFTRSDELQRHARTHTGDKRFECAQCQKRFMRSDHLTKHYKTHLVTKNL.

The disordered stretch occupies residues M1 to P32. A compositionally biased stretch (polar residues) spans A23–P32. At S78 the chain carries Phosphoserine. Disordered regions lie at residues S170–G197 and P225–A255. Positions Q185–G197 are enriched in polar residues. Positions G361–Q369 match the 9aaTAD; inactive motif. The span at A374–A392 shows a compositional bias: low complexity. A disordered region spans residues A374–S402. C2H2-type zinc fingers lie at residues H525–H549, F555–H579, and F585–H607.

Belongs to the Sp1 C2H2-type zinc-finger protein family.

Its subcellular location is the nucleus. Its function is as follows. Binds to GC box promoters elements and selectively activates mRNA synthesis from genes that contain functional recognition sites. The polypeptide is Transcription factor Sp2 (SP2) (Bos taurus (Bovine)).